A 640-amino-acid polypeptide reads, in one-letter code: MKIKVKLPDGKEKEYDRGITPAEIAKELGVKKAIGAVVNGELWDLKRPIENDCELRLVTLEDPEAPEFYRHTMAHILAQAVMRIYGKENVKLGIGPTIENGFYYDFDIKNGRLTEEDLPKIEQEMKKIIKENLPIERKEISKEEARKLFNNQPYKLELIEEIEGDRVTIYRQGEFVDLCRGPHLPSTGIVKHFKLLSVSGAYWRGSEKNPMLTRVYGTAFAKKEDLDNYLKFLEEAQRRDHRKLGPHLELFMLNTEYAPGMPFFLPKGVVVLNELMKFSRELHRERGYQEIFTPLIMNEQLWKISGHWDHYAENMYFIEKDEERYAVKPMNCPGHILVYKSRTVSYRDLPLRFFEFGRVHRYERSGVLHGLMRVRSFTQDDAHIFCTPGQIEEEILGVLDLINTIYSQFGFTYRVELSTMPEDHMGDEAIWEKATTALKNALERAGLSYKVNEGEGAFYGPKIDFHIRDSIGREWQCATIQLDFMMPEKFNVTYIGPDNKEHRAVMIHRAIYGSLERFFGILIEHFAGAFPTWLAPIQVAVIPISEKHNDGAEKIAKRISQEGFRVFFDNRRETLGYRIRQAQTQKIPYMIILGDKELESGKISVRTRTGKEIKDVDLEHFVETLRNEVLSRKLELLMEG.

The region spanning 1 to 59 (MKIKVKLPDGKEKEYDRGITPAEIAKELGVKKAIGAVVNGELWDLKRPIENDCELRLVT) is the TGS domain. Residues 240–531 (DHRKLGPHLE…LIEHFAGAFP (292 aa)) are catalytic. Zn(2+) is bound by residues Cys332, His383, and His508.

It belongs to the class-II aminoacyl-tRNA synthetase family. Homodimer. Zn(2+) serves as cofactor.

Its subcellular location is the cytoplasm. It catalyses the reaction tRNA(Thr) + L-threonine + ATP = L-threonyl-tRNA(Thr) + AMP + diphosphate + H(+). Catalyzes the attachment of threonine to tRNA(Thr) in a two-step reaction: L-threonine is first activated by ATP to form Thr-AMP and then transferred to the acceptor end of tRNA(Thr). Also edits incorrectly charged L-seryl-tRNA(Thr). This Thermotoga sp. (strain RQ2) protein is Threonine--tRNA ligase.